The sequence spans 268 residues: WUSCHEL-related homeobox 11 (268 aa).

The tract at residues 1–35 (MDQEQTPHSPTRHSRSPPSSASGSTSAEPVRSRWS) is disordered. Residues 16–27 (SPPSSASGSTSA) are compositionally biased toward low complexity. Residues 29–93 (PVRSRWSPKP…NRRSRSRRRQ (65 aa)) constitute a DNA-binding region (homeobox; WUS-type).

This sequence belongs to the WUS homeobox family.

Its subcellular location is the nucleus. Transcription factor which may be involved in developmental processes. This chain is WUSCHEL-related homeobox 11 (WOX11), found in Arabidopsis thaliana (Mouse-ear cress).